The primary structure comprises 340 residues: Cathepsin B (340 aa).

The signal sequence occupies residues 1–17 (MSWSRSILCLLGAFANA). The propeptide at 18–79 (RSIPYYPPLS…ERVDFAEDMD (62 aa)) is activation peptide. Asparagine 38 carries N-linked (GlcNAc...) asparagine glycosylation. Intrachain disulfides connect cysteine 93–cysteine 122, cysteine 105–cysteine 150, cysteine 141–cysteine 208, cysteine 142–cysteine 146, cysteine 179–cysteine 212, and cysteine 187–cysteine 198. Residue cysteine 108 is part of the active site. An N-linked (GlcNAc...) asparagine glycan is attached at asparagine 192. Catalysis depends on residues histidine 279 and asparagine 299.

This sequence belongs to the peptidase C1 family. Dimer of a heavy chain and a light chain cross-linked by a disulfide bond.

Its subcellular location is the lysosome. It carries out the reaction Hydrolysis of proteins with broad specificity for peptide bonds. Preferentially cleaves -Arg-Arg-|-Xaa bonds in small molecule substrates (thus differing from cathepsin L). In addition to being an endopeptidase, shows peptidyl-dipeptidase activity, liberating C-terminal dipeptides.. Thiol protease which is believed to participate in intracellular degradation and turnover of proteins. Has also been implicated in tumor invasion and metastasis. The polypeptide is Cathepsin B (CTSB) (Gallus gallus (Chicken)).